The chain runs to 942 residues: UvrABC system protein A (942 aa).

Residue G32–S39 coordinates ATP. The C4-type zinc-finger motif lies at C251–C278. ABC transporter domains follow at residues W308–I589 and G609–K937. G641–S648 serves as a coordination point for ATP. The C4-type zinc finger occupies C740–C766.

The protein belongs to the ABC transporter superfamily. UvrA family. Forms a heterotetramer with UvrB during the search for lesions.

It localises to the cytoplasm. In terms of biological role, the UvrABC repair system catalyzes the recognition and processing of DNA lesions. UvrA is an ATPase and a DNA-binding protein. A damage recognition complex composed of 2 UvrA and 2 UvrB subunits scans DNA for abnormalities. When the presence of a lesion has been verified by UvrB, the UvrA molecules dissociate. This Streptococcus pyogenes serotype M1 protein is UvrABC system protein A.